Consider the following 365-residue polypeptide: Carbohydrate sulfotransferase 10 (365 aa).

Topologically, residues 1–6 (MRRHWL) are cytoplasmic. A helical; Signal-anchor for type II membrane protein transmembrane segment spans residues 7–27 (LVGACGWVLLILMFVSKFINF). Residues 28–356 (SFRIPGDYAG…RYQGDFSLFD (329 aa)) are Lumenal-facing. 2 N-linked (GlcNAc...) asparagine glycosylation sites follow: N99 and N104. 3'-phosphoadenylyl sulfate contacts are provided by residues 132-138 (PKVGNTQ) and 194-202 (RDPFERLIS). An N-linked (GlcNAc...) asparagine glycan is attached at N325.

This sequence belongs to the sulfotransferase 2 family.

It is found in the golgi apparatus membrane. Catalyzes the transfer of sulfate to position 3 of terminal glucuronic acid of both protein- and lipid-linked oligosaccharides. Participates in biosynthesis of HNK-1 carbohydrate structure, a sulfated glucuronyl-lactosaminyl residue carried by many neural recognition molecules. The chain is Carbohydrate sulfotransferase 10 (chst10) from Danio rerio (Zebrafish).